The primary structure comprises 56 residues: Small ribosomal subunit protein eS31 (56 aa).

Cysteine 28, cysteine 31, cysteine 46, and cysteine 49 together coordinate Zn(2+). A C4-type zinc finger spans residues cysteine 28–cysteine 49.

It belongs to the eukaryotic ribosomal protein eS31 family. In terms of assembly, part of the 30S ribosomal subunit. It depends on Zn(2+) as a cofactor.

This Thermococcus gammatolerans (strain DSM 15229 / JCM 11827 / EJ3) protein is Small ribosomal subunit protein eS31.